The sequence spans 423 residues: Diels-Alderase cheD (423 aa).

Positions 1 to 18 (MKLCALFAGAVISTSAVA) are cleaved as a signal peptide. N-linked (GlcNAc...) asparagine glycosylation is found at asparagine 84 and asparagine 132.

Belongs to the Diels-Alderase family.

It participates in secondary metabolite biosynthesis. Diels-Alderase; part of the gene cluster that mediates the biosynthesis of chaetoglobosin A which has a unique inhibitory activity against actin polymerization in mammalian cells. Chaetoglobosin A and its intermediates are involved in the morphological differentiation of C.globosum. The first step of the pathway is the synthesis of prochaetoglobosin I via condensation of one acetyl-CoA, 8 malonyl-CoA, and a L-tryptophan molecule by the PKS-NRPS hybrid synthetase cheA, followed by reduction of backbone double bond to install desired geometry by the enoyl reductase cheB. Further multiple oxidation steps performed by the cytochrome P450 monooxygenases cheE and cheG, as well as by the FAD-linked oxidoreductase cheF, lead to the formation of chaetoglobosin A. Depending on the order of action of these reductases, distinct intermediates can be identified. Within the pathway, the cytochrome P450 monooxygenase cheE catalyzes a stereospecific epoxidation on prochaetoglobosin I, cytoglobosin D, and chaetoglobosin J intermediates. The FAD-linked oxidoreductase cheF performs dehydrogenation of the C-20 hydroxyl groups in the 20-dihyrochaetoglobosin A and cytoglobosin D intermediates. Finally, the cytochrome P450 monooxygenase cheG can catalyze the stereospecific dihydroxylation of prochaetoglobosin I and prochaetoglobosin IV at C-19 and C-20, respectively. The Diels-Alderase cheD may play a role in the post-PKS-NRPS biosynthetic steps catalyzing Diels-Alder cyclization. In Chaetomium globosum (strain ATCC 6205 / CBS 148.51 / DSM 1962 / NBRC 6347 / NRRL 1970) (Soil fungus), this protein is Diels-Alderase cheD.